Consider the following 165-residue polypeptide: MKTYRRQIREKILQALYTLELRDTDIESAANWLLTKEIQEDPNAMKFFNLLLKNIKEHREEIDQYIARHTFNWDMSRIAIIDKNILRMALAELLYCEDIPPKVSINEAIEIAKKFSSTDKSSKFVNGILDAIFNELKAEGKIHKNGRGLIDHSAIKLQKESETPE.

This sequence belongs to the NusB family.

Its function is as follows. Involved in transcription antitermination. Required for transcription of ribosomal RNA (rRNA) genes. Binds specifically to the boxA antiterminator sequence of the ribosomal RNA (rrn) operons. The polypeptide is Transcription antitermination protein NusB (Chlorobium phaeobacteroides (strain DSM 266 / SMG 266 / 2430)).